Consider the following 441-residue polypeptide: Sec-independent protein translocase protein TatCo (441 aa).

Residues 1–185 (MADEERDAGL…LVGEAPESDQ (185 aa)) form a disordered region. The segment covering 13 to 22 (ADDETDASDD) has biased composition (acidic residues). Residues 51-62 (TPRDETVTHGSD) show a composition bias toward basic and acidic residues. Residues 75-104 (DNGDDSDSDTDAAPDDADDSATDSDADSDD) are compositionally biased toward acidic residues. Basic and acidic residues predominate over residues 105 to 117 (EPRLLADDEHTSH). Composition is skewed to acidic residues over residues 122 to 138 (TYDDSSDESADDVDPDA) and 164 to 173 (EDADFDDEDV). Helical transmembrane passes span 200 to 220 (LAVVLGVAGAITLVLFPGADI), 276 to 296 (VAGLAGTVIGLPVFVYETYLF), 317 to 337 (LVLALVGVLFAHFVVLPAIFA), 357 to 377 (FNLILILMGYMAVVFQIPLFV), 395 to 415 (RLLFWGAFLGLAFLVSPDPTG), and 416 to 436 (MAPIIIGATMITLFEGTLAAL).

Belongs to the TatC family. In terms of assembly, forms a complex with TatA.

It localises to the cell membrane. In terms of biological role, part of the twin-arginine translocation (Tat) system that transports large folded proteins containing a characteristic twin-arginine motif in their signal peptide across membranes. This Haloferax volcanii (strain ATCC 29605 / DSM 3757 / JCM 8879 / NBRC 14742 / NCIMB 2012 / VKM B-1768 / DS2) (Halobacterium volcanii) protein is Sec-independent protein translocase protein TatCo.